We begin with the raw amino-acid sequence, 475 residues long: 7-dehydrocholesterol reductase (475 aa).

The segment at 1–21 (MAAKSQPSAPKTKSTSGLTNG) is disordered. At Ser14 the chain carries Phosphoserine. 6 helical membrane-spanning segments follow: residues 40-60 (LASVIFLLLFAPFIVYYFIMA), 151-173 (WLLTHLLWFANAHLLGWFSPTII), 178-200 (IPLLWCANILGYTVSTFAMVKGY), 266-286 (VTNSMVLVNILQAIYVLDFFW), 306-326 (LGWGDCVWLPYLYTLQGLYLV), and 331-351 (QLPTYYALGVLLLGLLGYYIF). Residues Lys358, Arg362, Leu395, Trp400, and 407–408 (NY) each bind NADP(+). The helical transmembrane segment at 420-440 (LACGGGHLLPYFYIIFMAILL) threads the bilayer. NADP(+) contacts are provided by residues Asp447, 451 to 455 (CANKY), and Tyr462.

This sequence belongs to the ERG4/ERG24 family. In terms of assembly, interacts with DHCR24; this interaction regulates DHCR7 activity. Interacts with TMEM147.

The protein resides in the endoplasmic reticulum membrane. It carries out the reaction cholesterol + NADP(+) = 7-dehydrocholesterol + NADPH + H(+). It catalyses the reaction 7-dehydrodesmosterol + NADPH + H(+) = desmosterol + NADP(+). The enzyme catalyses 5,6alpha-epoxy-5alpha-cholestan-3beta-ol + H2O = 5alpha-cholestane-3beta,5,6beta-triol. The catalysed reaction is 5,6beta-epoxy-5beta-cholestan-3beta-ol + H2O = 5alpha-cholestane-3beta,5,6beta-triol. It participates in steroid biosynthesis; cholesterol biosynthesis. Functionally, oxidoreductase that catalyzes the last step of the cholesterol synthesis pathway, which transforms cholesta-5,7-dien-3beta-ol (7-dehydrocholesterol,7-DHC) into cholesterol by reducing the C7-C8 double bond of its sterol core. Can also metabolize cholesta-5,7,24-trien-3beta-ol (7-dehydrodemosterol, 7-DHD) to desmosterol, which is then metabolized by the Delta(24)-sterol reductase (DHCR24) to cholesterol. Modulates ferroptosis (a form of regulated cell death driven by iron-dependent lipid peroxidation) through the metabolic breakdown of the anti-ferroptotic metabolites 7-DHC and 7-DHD which, when accumulated, divert the propagation of peroxyl radical-mediated damage from phospholipid components to its sterol core, protecting plasma and mitochondrial membranes from phospholipid autoxidation. Its function is as follows. Component of the microsomal antiestrogen binding site (AEBS), a multiproteic complex at the ER membrane that consists of an association between cholestenol Delta-isomerase/EBP and DHCR7. This complex is responsible for cholesterol-5,6-epoxide hydrolase (ChEH) activity, which consists in the hydration of cholesterol-5,6-epoxides (5,6-EC) into cholestane-3beta,5alpha,6beta-triol (CT). The precise role of each component of this complex has not been described yet. In Bos taurus (Bovine), this protein is 7-dehydrocholesterol reductase (DHCR7).